Consider the following 296-residue polypeptide: 4-diphosphocytidyl-2-C-methyl-D-erythritol kinase (296 aa).

Lysine 19 is an active-site residue. ATP is bound at residue 102–112; the sequence is PMGAGLGGGSS. Aspartate 144 is an active-site residue.

Belongs to the GHMP kinase family. IspE subfamily.

The enzyme catalyses 4-CDP-2-C-methyl-D-erythritol + ATP = 4-CDP-2-C-methyl-D-erythritol 2-phosphate + ADP + H(+). The protein operates within isoprenoid biosynthesis; isopentenyl diphosphate biosynthesis via DXP pathway; isopentenyl diphosphate from 1-deoxy-D-xylulose 5-phosphate: step 3/6. In terms of biological role, catalyzes the phosphorylation of the position 2 hydroxy group of 4-diphosphocytidyl-2C-methyl-D-erythritol. The protein is 4-diphosphocytidyl-2-C-methyl-D-erythritol kinase of Burkholderia pseudomallei (strain 1710b).